A 148-amino-acid polypeptide reads, in one-letter code: Leghemoglobin-1 (148 aa).

The Globin domain occupies Gly-2–Lys-146. Tyr-24 and Tyr-29 each carry nitrated tyrosine. Position 44 (Ser-44) interacts with heme b. Position 44 is a phosphoserine (Ser-44). His-61 lines the O2 pocket. Heme b contacts are provided by His-93 and Lys-96. At Tyr-134 the chain carries Nitrated tyrosine.

The protein belongs to the plant globin family. Monomer. Nitrated in effective nodules and particularly in hypoxic conditions; this mechanism may play a protective role in the symbiosis by buffering toxic peroxynitrite NO(2)(-). Nitration level decrease during nodule senescence. In terms of processing, phosphorylation at Ser-44 disrupts the molecular environment of its porphyrin ring oxygen binding pocket, thus leading to a reduced oxygen consumption and to the delivery of oxygen O(2) to symbiosomes. As to expression, root nodules.

The protein localises to the cytoplasm. Its subcellular location is the cytosol. The protein resides in the nucleus. Functionally, leghemoglobin that reversibly binds oxygen O(2) through a pentacoordinated heme iron. In root nodules, facilitates the diffusion of oxygen to the bacteroids while preventing the bacterial nitrogenase from being inactivated by buffering dioxygen, nitric oxide and carbon monoxide, and promoting the formation of reactive oxygen species (ROS, e.g. H(2)O(2)). This role is essential for symbiotic nitrogen fixation (SNF). The polypeptide is Leghemoglobin-1 (Pisum sativum (Garden pea)).